Here is a 218-residue protein sequence, read N- to C-terminus: Octanoyltransferase (218 aa).

In terms of domain architecture, BPL/LPL catalytic spans 27–210; that stretch reads TGGEDTLYLV…QFLAIFTHPA (184 aa). Residues 72–79, 139–141, and 152–154 contribute to the substrate site; these read RGGNITCH, SIG, and GLA. Cysteine 170 acts as the Acyl-thioester intermediate in catalysis.

It belongs to the LipB family.

The protein resides in the cytoplasm. The catalysed reaction is octanoyl-[ACP] + L-lysyl-[protein] = N(6)-octanoyl-L-lysyl-[protein] + holo-[ACP] + H(+). It participates in protein modification; protein lipoylation via endogenous pathway; protein N(6)-(lipoyl)lysine from octanoyl-[acyl-carrier-protein]: step 1/2. In terms of biological role, catalyzes the transfer of endogenously produced octanoic acid from octanoyl-acyl-carrier-protein onto the lipoyl domains of lipoate-dependent enzymes. Lipoyl-ACP can also act as a substrate although octanoyl-ACP is likely to be the physiological substrate. This Nitratidesulfovibrio vulgaris (strain ATCC 29579 / DSM 644 / CCUG 34227 / NCIMB 8303 / VKM B-1760 / Hildenborough) (Desulfovibrio vulgaris) protein is Octanoyltransferase.